Consider the following 306-residue polypeptide: Probable GTP 3',8-cyclase (306 aa).

In terms of domain architecture, Radical SAM core spans 5 to 232; the sequence is RFGRPVTNLR…RRRKYFLPVD (228 aa). Arg14 lines the GTP pocket. [4Fe-4S] cluster contacts are provided by Cys21 and Cys25. Tyr27 serves as a coordination point for S-adenosyl-L-methionine. Cys28 is a [4Fe-4S] cluster binding site. GTP is bound at residue Lys61. S-adenosyl-L-methionine is bound at residue Gly65. Residue Thr90 participates in GTP binding. Ser114 is a binding site for S-adenosyl-L-methionine. Residue Lys150 coordinates GTP. Met189 lines the S-adenosyl-L-methionine pocket. [4Fe-4S] cluster is bound by residues Cys250 and Cys253. Position 255–257 (255–257) interacts with GTP; sequence RLR. Cys267 is a [4Fe-4S] cluster binding site.

The protein belongs to the radical SAM superfamily. MoaA family. [4Fe-4S] cluster serves as cofactor.

The enzyme catalyses GTP + AH2 + S-adenosyl-L-methionine = (8S)-3',8-cyclo-7,8-dihydroguanosine 5'-triphosphate + 5'-deoxyadenosine + L-methionine + A + H(+). It participates in cofactor biosynthesis; molybdopterin biosynthesis. Functionally, catalyzes the cyclization of GTP to (8S)-3',8-cyclo-7,8-dihydroguanosine 5'-triphosphate. The protein is Probable GTP 3',8-cyclase of Pyrococcus abyssi (strain GE5 / Orsay).